Reading from the N-terminus, the 498-residue chain is Ammonium transporter 1 member 1 (498 aa).

A run of 11 helical transmembrane segments spans residues 39 to 59 (LLFSAYLVFAMQLGFAMLCAG), 74 to 94 (VLDAAAGALFYYLFGFAFAFG), 120 to 140 (FFLFQWAFAIAAAGITSGSIA), 148 to 168 (YLIYSAFLTGFVYPVVSHWIW), 192 to 212 (FAGSGVVHMVGGVAGLWGALI), 236 to 256 (LVVLGTFLLWFGWYGFNPGSF), 274 to 296 (SGVGRTAVTTTLAGSVAALTTLF), 307 to 327 (VVDVCNGLLGGFAAITAGCSV), 331 to 351 (WAAIICGFVSAWVLIGLNALA), 360 to 380 (LEAAQLHGGCGAWGILFTALF), and 411 to 431 (VIQILVIFGWVSCTMGPLFYG).

This sequence belongs to the ammonia transporter channel (TC 1.A.11.2) family. Expressed in roots and shoots.

Its subcellular location is the membrane. In terms of biological role, ammonium transporter probably involved in ammonium uptake from the soil. The protein is Ammonium transporter 1 member 1 (AMT1-1) of Oryza sativa subsp. japonica (Rice).